The primary structure comprises 405 residues: uncharacterized protein (405 aa).

This is an uncharacterized protein from Equine herpesvirus 2 (strain 86/87) (EHV-2).